The chain runs to 68 residues: conotoxin S11.3 (68 aa).

An N-terminal signal peptide occupies residues 1–26 (MMFRLTSVSCFLLVIVCLNLFQVVLT). 4 disulfide bridges follow: Cys29–Cys43, Cys36–Cys48, Cys42–Cys52, and Cys47–Cys56. A Tyrosine amide modification is found at Tyr60. The propeptide occupies 64-68 (ATFQE).

It belongs to the conotoxin I2 superfamily. Expressed by the venom duct.

It is found in the secreted. The sequence is that of conotoxin S11.3 from Conus striatus (Striated cone).